Reading from the N-terminus, the 619-residue chain is Chaperone protein HscA homolog (619 aa).

Belongs to the heat shock protein 70 family.

Functionally, chaperone involved in the maturation of iron-sulfur cluster-containing proteins. Has a low intrinsic ATPase activity which is markedly stimulated by HscB. The sequence is that of Chaperone protein HscA homolog from Haemophilus influenzae (strain PittEE).